The chain runs to 413 residues: 2,3-diketo-5-methylthiopentyl-1-phosphate enolase (413 aa).

The active-site Proton acceptor is the Lys-98. Substrate is bound by residues Lys-147, 173-176 (KDDE), His-264, Gly-337, and 359-360 (GG). Mg(2+)-binding residues include Lys-173, Asp-175, and Glu-176. Residue Lys-173 is modified to N6-carboxylysine.

It belongs to the RuBisCO large chain family. Type IV subfamily. In terms of assembly, homodimer. Mg(2+) is required as a cofactor.

The enzyme catalyses 5-methylsulfanyl-2,3-dioxopentyl phosphate = 2-hydroxy-5-methylsulfanyl-3-oxopent-1-enyl phosphate. Its pathway is amino-acid biosynthesis; L-methionine biosynthesis via salvage pathway; L-methionine from S-methyl-5-thio-alpha-D-ribose 1-phosphate: step 3/6. Catalyzes the enolization of 2,3-diketo-5-methylthiopentyl-1-phosphate (DK-MTP-1-P) into 2-hydroxy-3-keto-5-methylthiopentenyl-1-phosphate (HK-MTPenyl-1-P). This chain is 2,3-diketo-5-methylthiopentyl-1-phosphate enolase (mtnW), found in Geobacillus kaustophilus (strain HTA426).